Consider the following 85-residue polypeptide: Large ribosomal subunit protein bL27 (85 aa).

It belongs to the bacterial ribosomal protein bL27 family.

This Azobacteroides pseudotrichonymphae genomovar. CFP2 protein is Large ribosomal subunit protein bL27.